A 348-amino-acid chain; its full sequence is NADH-ubiquinone oxidoreductase chain 2 (348 aa).

The next 10 membrane-spanning stretches (helical) occupy residues 1–21, 25–45, 60–80, 93–115, 149–169, 177–197, 200–220, 239–259, 274–294, and 326–346; these read MSPY…TITF, SWLM…PLMV, FLTQ…NAWM, LSAP…HFWL, LNTT…GLGG, KVLA…IQYS, LALL…LTLM, IATM…PLTG, NLPA…FFYL, and LAML…MVAI.

Belongs to the complex I subunit 2 family.

Its subcellular location is the mitochondrion inner membrane. The enzyme catalyses a ubiquinone + NADH + 5 H(+)(in) = a ubiquinol + NAD(+) + 4 H(+)(out). Functionally, core subunit of the mitochondrial membrane respiratory chain NADH dehydrogenase (Complex I) that is believed to belong to the minimal assembly required for catalysis. Complex I functions in the transfer of electrons from NADH to the respiratory chain. The immediate electron acceptor for the enzyme is believed to be ubiquinone. The sequence is that of NADH-ubiquinone oxidoreductase chain 2 (MT-ND2) from Latimeria chalumnae (Coelacanth).